Reading from the N-terminus, the 459-residue chain is MNHRLVALSVASLALLAPLTVPAQGLRPSSATVGAGVLAPARVPAATGLAADYIVAVVNSEPITNNEVRAALQRVLQQLAQQGNPQVDSKTLVRQVLERLINEKAQLQLARESGIAADEAAIDQAEQNIARQNQLTVAELRRRLTQEGGVPGQFRNQLRDQILLTRLREREVEPRARVSELEIDQFLREQQSSTPAVQQINLAQVLVSVPDTATPVQVTALQARAQRALARARAGEDFVTLVREFSDASDKASLANGGELGLRTADRYPPLFLEATHNLAVGEISALVRSGAGFHILKVLEKKSAALPAMTVTQSRARHILLRVSPQLTESAARDKLNEFKKRVAAGQADFAALARDHSQDGSAAQGGDLGWANPGMFVPEFEAVMNSLTPGQISEPLVSRFGVHLIQLMERRQATLSPQEQREAVRAMLHEKKLDEAYISWAQDVRGRAYVELREPPQ.

Residues 1-23 (MNHRLVALSVASLALLAPLTVPA) form the signal peptide. PpiC domains follow at residues 197–301 (VQQI…KVLE) and 312–411 (VTQS…QLME).

It is found in the periplasm. The catalysed reaction is [protein]-peptidylproline (omega=180) = [protein]-peptidylproline (omega=0). In terms of biological role, chaperone involved in the correct folding and assembly of outer membrane proteins. Recognizes specific patterns of aromatic residues and the orientation of their side chains, which are found more frequently in integral outer membrane proteins. May act in both early periplasmic and late outer membrane-associated steps of protein maturation. This chain is Chaperone SurA, found in Albidiferax ferrireducens (strain ATCC BAA-621 / DSM 15236 / T118) (Rhodoferax ferrireducens).